We begin with the raw amino-acid sequence, 317 residues long: Large ribosomal subunit protein uL10 (317 aa).

Belongs to the universal ribosomal protein uL10 family. As to quaternary structure, P0 forms a pentameric complex by interaction with dimers of P1 and P2. In terms of processing, phosphorylated.

Its function is as follows. Ribosomal protein P0 is the functional equivalent of E.coli protein L10. In Ictalurus punctatus (Channel catfish), this protein is Large ribosomal subunit protein uL10 (rplp0).